The primary structure comprises 546 residues: MAKEIKFSDSARNLLFEGVRQLHDAVKVTMGPRGRNVLIQKSYGAPSITKDGVSVAKEIELSCPVANMGAQLVKEVASKTADAAGDGTTTATVLAYSIFKEGLRNITAGANPIEVKRGMDKAAEAIINELKKASKKVGGKEEITQVATISANSDHNIGKLIADAMEKVGKDGVITVEEAKGIEDELDVVEGMQFDRGYLSPYFVTNAEKMTAQLDNAYILLTDKKISSMKDILPLLEKTMKEGKPLLIIAEDIEGEALTTLVVNKLRGVLNIAAVKAPGFGDRRKEMLKDIAILTGGQVISEELGLSLENAEVEFLGKAGRIVIDKDNTTIVDGKGHSDDVKDRVVQIKTQIASTTSDYDKEKLQERLAKLSGGVAVIKVGAASEVEMKEKKDRVDDALSATKAAVEEGIVIGGGAALIRAAQKVHLNLHDDEKVGYEIIMRAIKAPLAQIAINAGYDGGVVVNEVEKHEGHFGFNASNGKYVDMFKEGIIDPLKVERIALQNAVSVSSLLLTTEATVHEIKEEKATPAMPDMGGMGGMGGMGGMM.

ATP is bound by residues T29 to P32, K50, D86 to T90, G414, and D492.

The protein belongs to the chaperonin (HSP60) family. As to quaternary structure, forms a cylinder of 14 subunits composed of two heptameric rings stacked back-to-back. Interacts with the co-chaperonin GroES.

The protein resides in the cytoplasm. It catalyses the reaction ATP + H2O + a folded polypeptide = ADP + phosphate + an unfolded polypeptide.. Functionally, together with its co-chaperonin GroES, plays an essential role in assisting protein folding. The GroEL-GroES system forms a nano-cage that allows encapsulation of the non-native substrate proteins and provides a physical environment optimized to promote and accelerate protein folding. This is Chaperonin GroEL from Helicobacter pylori (strain P12).